The primary structure comprises 356 residues: Nicotinate-nucleotide--dimethylbenzimidazole phosphoribosyltransferase (356 aa).

Glutamate 317 serves as the catalytic Proton acceptor.

The protein belongs to the CobT family. In terms of assembly, homodimer.

It carries out the reaction 5,6-dimethylbenzimidazole + nicotinate beta-D-ribonucleotide = alpha-ribazole 5'-phosphate + nicotinate + H(+). Its pathway is nucleoside biosynthesis; alpha-ribazole biosynthesis; alpha-ribazole from 5,6-dimethylbenzimidazole: step 1/2. Its function is as follows. Catalyzes the synthesis of alpha-ribazole-5'-phosphate from nicotinate mononucleotide (NAMN) and 5,6-dimethylbenzimidazole (DMB). The sequence is that of Nicotinate-nucleotide--dimethylbenzimidazole phosphoribosyltransferase from Salmonella agona (strain SL483).